The following is a 453-amino-acid chain: Tubulin delta chain (453 aa).

A GTP-binding site is contributed by 143-149 (AGGTGSG).

Belongs to the tubulin family. In terms of assembly, found in a complex with TEDC1, TEDC2, TUBE1 and TUBD1.

It localises to the nucleus. It is found in the cytoplasm. The protein localises to the cytoskeleton. The protein resides in the microtubule organizing center. Its subcellular location is the centrosome. It localises to the centriole. It is found in the cell projection. The protein localises to the cilium. Functionally, acts as a positive regulator of hedgehog signaling and regulates ciliary function. The protein is Tubulin delta chain (TUBD1) of Canis lupus familiaris (Dog).